Reading from the N-terminus, the 934-residue chain is AP-2 complex subunit alpha (934 aa).

The interval 623-670 (RVPENAEIRETKSPVPNSHNNAHSNAQTNHTSSANNANASSDLLGLST) is disordered. Positions 636–645 (PVPNSHNNAH) are enriched in polar residues. A compositionally biased stretch (low complexity) spans 646–663 (SNAQTNHTSSANNANASS).

This sequence belongs to the adapter complexes large subunit family. Adaptor protein complex 2 (AP-2) is a heterotetramer composed of two large adaptins (alpha-type and beta-type subunits), a medium adaptin (mu-type subunit AP50) and a small adaptin (sigma-type subunit AP17).

It is found in the cell membrane. It localises to the membrane. The protein resides in the coated pit. In terms of biological role, adaptins are components of the adapter complexes which link clathrin to receptors in coated vesicles. Clathrin-associated protein complexes are believed to interact with the cytoplasmic tails of membrane proteins, leading to their selection and concentration. Alpha adaptin is a subunit of the plasma membrane adapter. This chain is AP-2 complex subunit alpha, found in Anopheles gambiae (African malaria mosquito).